The following is a 172-amino-acid chain: Macro domain-containing protein lp_3408 (172 aa).

The Macro domain maps to 1–171 (MVEIKVIHGD…VFSTALAALT (171 aa)).

The protein belongs to the MacroD-type family.

This chain is Macro domain-containing protein lp_3408, found in Lactiplantibacillus plantarum (strain ATCC BAA-793 / NCIMB 8826 / WCFS1) (Lactobacillus plantarum).